The chain runs to 281 residues: 2-dehydro-3-deoxyphosphooctonate aldolase (281 aa).

This sequence belongs to the KdsA family.

The protein localises to the cytoplasm. The enzyme catalyses D-arabinose 5-phosphate + phosphoenolpyruvate + H2O = 3-deoxy-alpha-D-manno-2-octulosonate-8-phosphate + phosphate. It functions in the pathway carbohydrate biosynthesis; 3-deoxy-D-manno-octulosonate biosynthesis; 3-deoxy-D-manno-octulosonate from D-ribulose 5-phosphate: step 2/3. It participates in bacterial outer membrane biogenesis; lipopolysaccharide biosynthesis. This chain is 2-dehydro-3-deoxyphosphooctonate aldolase, found in Azotobacter vinelandii (strain DJ / ATCC BAA-1303).